A 273-amino-acid polypeptide reads, in one-letter code: HTH-type transcriptional activator RhaS (273 aa).

The 99-residue stretch at 174 to 272 (YQLLDWLQNN…SQSPRDLRSQ (99 aa)) folds into the HTH araC/xylS-type domain. DNA-binding regions (H-T-H motif) lie at residues 191-212 (PELA…KNKT) and 239-262 (VTDI…KREF).

Binds DNA as a dimer.

Its subcellular location is the cytoplasm. Functionally, activates expression of the rhaBAD and rhaT operons. The sequence is that of HTH-type transcriptional activator RhaS from Yersinia pestis bv. Antiqua (strain Angola).